The primary structure comprises 353 residues: Homeobox protein Mohawk (353 aa).

The span at 18-27 (RGTPDRERGS) shows a compositional bias: basic and acidic residues. The tract at residues 18–50 (RGTPDRERGSRTFSGFLDNPHTGPEVGIPDGPP) is disordered. The segment at residues 71–132 (VRHKRQALQD…NARRRLKNTV (62 aa)) is a DNA-binding region (homeobox; TALE-type). Disordered stretches follow at residues 157 to 183 (LSVS…EEGY) and 243 to 302 (MGKT…PSKD).

It belongs to the TALE/IRO homeobox family.

Its subcellular location is the nucleus. In terms of biological role, may act as a morphogenetic regulator of cell adhesion. Participates in the early events that lead to differentiation. This is Homeobox protein Mohawk (Mkx) from Mus musculus (Mouse).